The following is a 514-amino-acid chain: MHDRLIIFDTTLRDGEQSPGASMTRDEKVRIARALERLKVDVIEAGFPAASPGDFEAVQAVARTIKDSRVCGLARALDRDIDRAGEALKDAQRARIHTFIATSPIHMRHKLQMSPDQVVEYAVKAVKRARQYTDDVEFSPEDAGRSEEDFLCRILEAVIDAGATTLNIPDTVGYAFPEQFGHMIGRLIERIPNSDKAVFSVHCHNDLGLAVANSLAAVLHGARQVECTINGLGERAGNAALEEIVMAVRTRKDIFPCHTDIETREIVACSKLVSSITGFPIQPNKAIVGANAFAHESGIHQDGVLKSRETYEIMSAEDVGWSTNRMVLGKHSGRNAFRTRMQELGIEFASEEELNSVFQRFKVLADKKHEIFDEDLQALITEAGAEAEDERVKLVALRVCSETGEIPHAQVTIKVDNEERTGTSSGGGAVDASLKAIESLLHTDTALTLYSVNNITSGTDAQGEVTVRLEKGGRIVNGQGADTDIVIASAKAYVNAVNKLLAPIQRTHPQVGDV.

Positions 5–267 (LIIFDTTLRD…HTDIETREIV (263 aa)) constitute a Pyruvate carboxyltransferase domain. Mn(2+)-binding residues include Asp-14, His-202, His-204, and Asn-238. Residues 393–514 (KLVALRVCSE…QRTHPQVGDV (122 aa)) are regulatory domain.

Belongs to the alpha-IPM synthase/homocitrate synthase family. LeuA type 1 subfamily. Homodimer. It depends on Mn(2+) as a cofactor.

It localises to the cytoplasm. The enzyme catalyses 3-methyl-2-oxobutanoate + acetyl-CoA + H2O = (2S)-2-isopropylmalate + CoA + H(+). It participates in amino-acid biosynthesis; L-leucine biosynthesis; L-leucine from 3-methyl-2-oxobutanoate: step 1/4. Functionally, catalyzes the condensation of the acetyl group of acetyl-CoA with 3-methyl-2-oxobutanoate (2-ketoisovalerate) to form 3-carboxy-3-hydroxy-4-methylpentanoate (2-isopropylmalate). This chain is 2-isopropylmalate synthase, found in Methylococcus capsulatus (strain ATCC 33009 / NCIMB 11132 / Bath).